A 103-amino-acid chain; its full sequence is UPF0145 protein HH_1800 (103 aa).

This sequence belongs to the UPF0145 family.

The chain is UPF0145 protein HH_1800 from Helicobacter hepaticus (strain ATCC 51449 / 3B1).